Here is a 241-residue protein sequence, read N- to C-terminus: Demethylmenaquinone methyltransferase (241 aa).

Residues T60, D81, and 106–107 each bind S-adenosyl-L-methionine; that span reads DA.

The protein belongs to the class I-like SAM-binding methyltransferase superfamily. MenG/UbiE family.

The catalysed reaction is a 2-demethylmenaquinol + S-adenosyl-L-methionine = a menaquinol + S-adenosyl-L-homocysteine + H(+). Its pathway is quinol/quinone metabolism; menaquinone biosynthesis; menaquinol from 1,4-dihydroxy-2-naphthoate: step 2/2. Its function is as follows. Methyltransferase required for the conversion of demethylmenaquinol (DMKH2) to menaquinol (MKH2). The protein is Demethylmenaquinone methyltransferase of Staphylococcus epidermidis (strain ATCC 35984 / DSM 28319 / BCRC 17069 / CCUG 31568 / BM 3577 / RP62A).